Here is a 340-residue protein sequence, read N- to C-terminus: Methionine import ATP-binding protein MetN (340 aa).

The region spanning 6–245 (IEFEGITKVF…PQTNVAKRFV (240 aa)) is the ABC transporter domain. 42–49 (GYSGAGKS) is an ATP binding site.

Belongs to the ABC transporter superfamily. Methionine importer (TC 3.A.1.24) family. The complex is composed of two ATP-binding proteins (MetN), two transmembrane proteins (MetI) and a solute-binding protein (MetQ).

It is found in the cell membrane. It carries out the reaction L-methionine(out) + ATP + H2O = L-methionine(in) + ADP + phosphate + H(+). The catalysed reaction is D-methionine(out) + ATP + H2O = D-methionine(in) + ADP + phosphate + H(+). Functionally, part of the ABC transporter complex MetNIQ involved in methionine import. Responsible for energy coupling to the transport system. The sequence is that of Methionine import ATP-binding protein MetN from Corynebacterium diphtheriae (strain ATCC 700971 / NCTC 13129 / Biotype gravis).